A 196-amino-acid chain; its full sequence is 3-isopropylmalate dehydratase small subunit (196 aa).

Belongs to the LeuD family. LeuD type 1 subfamily. In terms of assembly, heterodimer of LeuC and LeuD.

The enzyme catalyses (2R,3S)-3-isopropylmalate = (2S)-2-isopropylmalate. The protein operates within amino-acid biosynthesis; L-leucine biosynthesis; L-leucine from 3-methyl-2-oxobutanoate: step 2/4. Catalyzes the isomerization between 2-isopropylmalate and 3-isopropylmalate, via the formation of 2-isopropylmaleate. The polypeptide is 3-isopropylmalate dehydratase small subunit (Rhodopirellula baltica (strain DSM 10527 / NCIMB 13988 / SH1)).